The chain runs to 161 residues: Large ribosomal subunit protein uL11 (161 aa).

This sequence belongs to the universal ribosomal protein uL11 family. Part of the ribosomal stalk of the 50S ribosomal subunit. Interacts with L10 and the large rRNA to form the base of the stalk. L10 forms an elongated spine to which L12 dimers bind in a sequential fashion forming a multimeric L10(L12)X complex.

Its function is as follows. Forms part of the ribosomal stalk which helps the ribosome interact with GTP-bound translation factors. This is Large ribosomal subunit protein uL11 from Methanococcoides burtonii (strain DSM 6242 / NBRC 107633 / OCM 468 / ACE-M).